The sequence spans 541 residues: Plasminogen-binding protein PgbB (541 aa).

Composition is skewed to basic and acidic residues over residues 420–434 (HKAKENKQPLEENKV) and 446–455 (VKTRRPEPTK). The segment at 420 to 541 (HKAKENKQPL…RRKALEMNKK (122 aa)) is disordered. A compositionally biased stretch (polar residues) spans 456-476 (DQNNAIQQGETKNNESKNTPI). Positions 480 to 541 (NAAKKEAPKP…RRKALEMNKK (62 aa)) are enriched in basic and acidic residues.

Its subcellular location is the cell surface. Its function is as follows. Binds plasminogen, specifically, and in a concentration and lysine-dependent manner. Plasminogen is the precursor of plasmin, a serine protease that cleaves fibrin, fibronectin, laminin and vitronectin. Acquisition of plasminogen/plasmin could enable H.pylori to degrade host components. The protein is Plasminogen-binding protein PgbB (pgbB) of Helicobacter pylori (strain J99 / ATCC 700824) (Campylobacter pylori J99).